A 306-amino-acid polypeptide reads, in one-letter code: Curved DNA-binding protein (306 aa).

In terms of domain architecture, J spans 5 to 69; the sequence is DYYAIMGVKP…QRRAEYDQMW (65 aa).

The protein resides in the cytoplasm. Its subcellular location is the nucleoid. Its function is as follows. DNA-binding protein that preferentially recognizes a curved DNA sequence. It is probably a functional analog of DnaJ; displays overlapping activities with DnaJ, but functions under different conditions, probably acting as a molecular chaperone in an adaptive response to environmental stresses other than heat shock. Lacks autonomous chaperone activity; binds native substrates and targets them for recognition by DnaK. Its activity is inhibited by the binding of CbpM. The protein is Curved DNA-binding protein of Shigella boydii serotype 18 (strain CDC 3083-94 / BS512).